Here is a 293-residue protein sequence, read N- to C-terminus: Probable xyloglucan endotransglucosylase/hydrolase protein 7 (293 aa).

A signal peptide spans 1–29 (MVVSLFSSRNVFYTLSLCLFAALYQPVMS). The region spanning 30-223 (RPAKFEDDFR…WSRAPFYAYY (194 aa)) is the GH16 domain. Catalysis depends on E109, which acts as the Nucleophile. Residue E113 is the Proton donor of the active site. Residue E113 coordinates xyloglucan. N117 carries an N-linked (GlcNAc...) asparagine glycan. Xyloglucan-binding positions include 126 to 128 (QTN), 136 to 138 (DRE), 202 to 203 (DW), and G207. N-linked (GlcNAc...) asparagine glycosylation is present at N213. 2 cysteine pairs are disulfide-bonded: C231/C239 and C276/C289. R281 contacts xyloglucan.

It belongs to the glycosyl hydrolase 16 family. XTH group 1 subfamily. Contains at least one intrachain disulfide bond essential for its enzymatic activity.

The protein resides in the secreted. Its subcellular location is the cell wall. It localises to the extracellular space. The protein localises to the apoplast. The catalysed reaction is breaks a beta-(1-&gt;4) bond in the backbone of a xyloglucan and transfers the xyloglucanyl segment on to O-4 of the non-reducing terminal glucose residue of an acceptor, which can be a xyloglucan or an oligosaccharide of xyloglucan.. Its function is as follows. Catalyzes xyloglucan endohydrolysis (XEH) and/or endotransglycosylation (XET). Cleaves and religates xyloglucan polymers, an essential constituent of the primary cell wall, and thereby participates in cell wall construction of growing tissues. The sequence is that of Probable xyloglucan endotransglucosylase/hydrolase protein 7 (XTH7) from Arabidopsis thaliana (Mouse-ear cress).